Here is a 685-residue protein sequence, read N- to C-terminus: DNA ligase (685 aa).

NAD(+) contacts are provided by residues 47 to 51 (DSEYD), 96 to 97 (SL), and glutamate 125. The N6-AMP-lysine intermediate role is filled by lysine 127. NAD(+) contacts are provided by arginine 148, glutamate 185, lysine 304, and lysine 328. Cysteine 422, cysteine 425, cysteine 440, and cysteine 446 together coordinate Zn(2+). The region spanning 605–685 (AEAQPLKGQT…ELLALLAANA (81 aa)) is the BRCT domain.

The protein belongs to the NAD-dependent DNA ligase family. LigA subfamily. Mg(2+) is required as a cofactor. The cofactor is Mn(2+).

It catalyses the reaction NAD(+) + (deoxyribonucleotide)n-3'-hydroxyl + 5'-phospho-(deoxyribonucleotide)m = (deoxyribonucleotide)n+m + AMP + beta-nicotinamide D-nucleotide.. In terms of biological role, DNA ligase that catalyzes the formation of phosphodiester linkages between 5'-phosphoryl and 3'-hydroxyl groups in double-stranded DNA using NAD as a coenzyme and as the energy source for the reaction. It is essential for DNA replication and repair of damaged DNA. In Shewanella baltica (strain OS223), this protein is DNA ligase.